A 453-amino-acid chain; its full sequence is Bifunctional protein GlmU (453 aa).

The interval 1-225 is pyrophosphorylase; that stretch reads MNIVILAAGT…EWETLGVNSK (225 aa). Residues 6–9, lysine 20, glutamine 71, 76–77, 98–100, glycine 135, glutamate 150, asparagine 165, and asparagine 223 each bind UDP-N-acetyl-alpha-D-glucosamine; these read LAAG, GT, and YGD. Aspartate 100 is a binding site for Mg(2+). Residue asparagine 223 coordinates Mg(2+). Residues 226–246 form a linker region; sequence AQLAELERIHQRNVADALLVD. Residues 247–453 form an N-acetyltransferase region; that stretch reads GVTLADPARV…GYVRPVKKKS (207 aa). Positions 329 and 347 each coordinate UDP-N-acetyl-alpha-D-glucosamine. Residue histidine 359 is the Proton acceptor of the active site. 2 residues coordinate UDP-N-acetyl-alpha-D-glucosamine: tyrosine 362 and asparagine 373. Residues alanine 376, 382-383, serine 401, and alanine 419 contribute to the acetyl-CoA site; that span reads NY.

In the N-terminal section; belongs to the N-acetylglucosamine-1-phosphate uridyltransferase family. This sequence in the C-terminal section; belongs to the transferase hexapeptide repeat family. In terms of assembly, homotrimer. Mg(2+) serves as cofactor.

The protein localises to the cytoplasm. It catalyses the reaction alpha-D-glucosamine 1-phosphate + acetyl-CoA = N-acetyl-alpha-D-glucosamine 1-phosphate + CoA + H(+). It carries out the reaction N-acetyl-alpha-D-glucosamine 1-phosphate + UTP + H(+) = UDP-N-acetyl-alpha-D-glucosamine + diphosphate. The protein operates within nucleotide-sugar biosynthesis; UDP-N-acetyl-alpha-D-glucosamine biosynthesis; N-acetyl-alpha-D-glucosamine 1-phosphate from alpha-D-glucosamine 6-phosphate (route II): step 2/2. It participates in nucleotide-sugar biosynthesis; UDP-N-acetyl-alpha-D-glucosamine biosynthesis; UDP-N-acetyl-alpha-D-glucosamine from N-acetyl-alpha-D-glucosamine 1-phosphate: step 1/1. Its pathway is bacterial outer membrane biogenesis; LPS lipid A biosynthesis. Functionally, catalyzes the last two sequential reactions in the de novo biosynthetic pathway for UDP-N-acetylglucosamine (UDP-GlcNAc). The C-terminal domain catalyzes the transfer of acetyl group from acetyl coenzyme A to glucosamine-1-phosphate (GlcN-1-P) to produce N-acetylglucosamine-1-phosphate (GlcNAc-1-P), which is converted into UDP-GlcNAc by the transfer of uridine 5-monophosphate (from uridine 5-triphosphate), a reaction catalyzed by the N-terminal domain. This is Bifunctional protein GlmU from Burkholderia ambifaria (strain ATCC BAA-244 / DSM 16087 / CCUG 44356 / LMG 19182 / AMMD) (Burkholderia cepacia (strain AMMD)).